Here is a 161-residue protein sequence, read N- to C-terminus: Phosphopantetheine adenylyltransferase (161 aa).

Thr-10 provides a ligand contact to substrate. ATP is bound by residues 10–11 and His-18; that span reads TF. Positions 42, 74, and 88 each coordinate substrate. Residues 89–91, Glu-99, and 124–130 each bind ATP; these read GIR and WRYLSST.

The protein belongs to the bacterial CoaD family. In terms of assembly, homohexamer. The cofactor is Mg(2+).

Its subcellular location is the cytoplasm. It catalyses the reaction (R)-4'-phosphopantetheine + ATP + H(+) = 3'-dephospho-CoA + diphosphate. The protein operates within cofactor biosynthesis; coenzyme A biosynthesis; CoA from (R)-pantothenate: step 4/5. Functionally, reversibly transfers an adenylyl group from ATP to 4'-phosphopantetheine, yielding dephospho-CoA (dPCoA) and pyrophosphate. The polypeptide is Phosphopantetheine adenylyltransferase (Haemophilus ducreyi (strain 35000HP / ATCC 700724)).